Consider the following 418-residue polypeptide: tRNA-2-methylthio-N(6)-dimethylallyladenosine synthase (418 aa).

The MTTase N-terminal domain maps to 2–118; the sequence is PGYYLWTIGC…WREIPEGFIL (117 aa). Residues Cys11, Cys47, Cys81, Cys134, Cys138, and Cys141 each contribute to the [4Fe-4S] cluster site. The Radical SAM core domain maps to 120–351; it reads LRPPVSANVT…EDLQKETVGK (232 aa). The 69-residue stretch at 346-414 folds into the TRAM domain; sequence KETVGKANAA…PWSLQAKLVN (69 aa).

Belongs to the methylthiotransferase family. MiaB subfamily. As to quaternary structure, monomer. [4Fe-4S] cluster is required as a cofactor.

It is found in the cytoplasm. It carries out the reaction N(6)-dimethylallyladenosine(37) in tRNA + (sulfur carrier)-SH + AH2 + 2 S-adenosyl-L-methionine = 2-methylsulfanyl-N(6)-dimethylallyladenosine(37) in tRNA + (sulfur carrier)-H + 5'-deoxyadenosine + L-methionine + A + S-adenosyl-L-homocysteine + 2 H(+). Catalyzes the methylthiolation of N6-(dimethylallyl)adenosine (i(6)A), leading to the formation of 2-methylthio-N6-(dimethylallyl)adenosine (ms(2)i(6)A) at position 37 in tRNAs that read codons beginning with uridine. The protein is tRNA-2-methylthio-N(6)-dimethylallyladenosine synthase of Dehalococcoides mccartyi (strain CBDB1).